Consider the following 417-residue polypeptide: Ig-like V-type domain-containing protein FAM187A (417 aa).

Positions 1–18 (MSLAHTTVLLWAWGSLQA) are cleaved as a signal peptide. Residues 19 to 377 (FEIVEKESVF…ASLSDPETRT (359 aa)) are Extracellular-facing. Asn-248 and Asn-318 each carry an N-linked (GlcNAc...) asparagine glycan. One can recognise an Ig-like V-type domain in the interval 268 to 362 (PWVPQVPIQF…IAGFRLGVIT (95 aa)). Cys-290 and Cys-346 are oxidised to a cystine. The chain crosses the membrane as a helical span at residues 378 to 398 (AIELTLMGYLLITIFFITIHL). The Cytoplasmic segment spans residues 399-417 (CRCCCQSRCCPNFSAQTLL).

This sequence belongs to the FAM187 family.

It localises to the membrane. In Mus musculus (Mouse), this protein is Ig-like V-type domain-containing protein FAM187A (Fam187a).